The sequence spans 251 residues: Triosephosphate isomerase (251 aa).

9–11 is a substrate binding site; it reads NWK. H95 acts as the Electrophile in catalysis. The active-site Proton acceptor is E167. Substrate contacts are provided by residues G173, S212, and 233 to 234; that span reads GG.

Belongs to the triosephosphate isomerase family. In terms of assembly, homodimer.

It localises to the cytoplasm. It catalyses the reaction D-glyceraldehyde 3-phosphate = dihydroxyacetone phosphate. It participates in carbohydrate biosynthesis; gluconeogenesis. Its pathway is carbohydrate degradation; glycolysis; D-glyceraldehyde 3-phosphate from glycerone phosphate: step 1/1. Involved in the gluconeogenesis. Catalyzes stereospecifically the conversion of dihydroxyacetone phosphate (DHAP) to D-glyceraldehyde-3-phosphate (G3P). This chain is Triosephosphate isomerase, found in Ectopseudomonas mendocina (strain ymp) (Pseudomonas mendocina).